A 396-amino-acid polypeptide reads, in one-letter code: uncharacterized protein (396 aa).

The protein belongs to the NAD(P)-dependent epimerase/dehydratase family. The cofactor is NAD(+). NADP(+) serves as cofactor.

Functionally, putative nucleotide sugar epimerase/dehydrogenase. This is an uncharacterized protein from Sinorhizobium fredii (strain NBRC 101917 / NGR234).